The following is a 107-amino-acid chain: Small integral membrane protein 19 (107 aa).

The helical transmembrane segment at 25 to 43 (ATNVYLIVILVSFGLFMYA) threads the bilayer. Positions 88 to 107 (RKYEYQQPQSQADSVQLSLE) are disordered. Positions 93–107 (QQPQSQADSVQLSLE) are enriched in polar residues.

The protein belongs to the SMIM19 family.

The protein localises to the membrane. This Mus musculus (Mouse) protein is Small integral membrane protein 19 (Smim19).